A 540-amino-acid polypeptide reads, in one-letter code: Synaptotagmin-3 (540 aa).

The helical transmembrane segment at 9–29 threads the bilayer; it reads GIIGFVIGIPIGLILGFFVLI. In terms of domain architecture, SMP-LTD spans 67 to 249; it reads DYERVDWFNK…WPQVLEIPIL (183 aa). The interval 227–509 is phospholipid binding; the sequence is QETIKRQVSS…ELGHVDINLD (283 aa). 2 C2 domains span residues 240–363 and 401–521; these read WPQV…EFNL and RKES…NQKY. The Ca(2+) site is built by Asp-277, Asp-283, Asp-333, Asp-335, and Asp-341.

Belongs to the synaptotagmin family. Ca(2+) is required as a cofactor.

It is found in the membrane. Functionally, may be involved in membrane trafficking. The polypeptide is Synaptotagmin-3 (SYT3) (Arabidopsis thaliana (Mouse-ear cress)).